The primary structure comprises 443 residues: Probable D-serine dehydratase (443 aa).

Lysine 118 carries the N6-(pyridoxal phosphate)lysine modification.

It belongs to the serine/threonine dehydratase family. DsdA subfamily. Pyridoxal 5'-phosphate is required as a cofactor.

It carries out the reaction D-serine = pyruvate + NH4(+). In Aeromonas hydrophila subsp. hydrophila (strain ATCC 7966 / DSM 30187 / BCRC 13018 / CCUG 14551 / JCM 1027 / KCTC 2358 / NCIMB 9240 / NCTC 8049), this protein is Probable D-serine dehydratase.